Reading from the N-terminus, the 150-residue chain is MEKRKDTKTTIAKASEAQNKSWYVIDAAGKTLGRLSSEVAKILRGKHKVTYTPHVAMGDGVIVINAEKVHLTGAKKGQKIYRYYTGYISGMREVAFENMIAKKPSYIIEHAIKGMMPKTRLGKRQVKSLRILKGDYYQEFKSQKPIVLDV.

The protein belongs to the universal ribosomal protein uL13 family. In terms of assembly, part of the 50S ribosomal subunit.

This protein is one of the early assembly proteins of the 50S ribosomal subunit, although it is not seen to bind rRNA by itself. It is important during the early stages of 50S assembly. The chain is Large ribosomal subunit protein uL13 from Chlamydia abortus (strain DSM 27085 / S26/3) (Chlamydophila abortus).